The chain runs to 525 residues: Neutrophil cytosol factor 2 (525 aa).

TPR repeat units follow at residues 37 to 70, 71 to 104, and 121 to 154; these read SRICFNIGCVNTILENLQAAEQAFTKSINRDKHS, AVAYFQRGMLYYRMEKYDLAIKDLKEALTQLRGN, and CEVLYNIALMHAKKEEWKKAEEQLALATNMKSEP. Phosphothreonine is present on Thr-233. Residues 240–299 enclose the SH3 1 domain; the sequence is LEGEAHRVLFGFVPETPEELQVMPGNIVFVLKKGSDNWATVMFNGQKGLVPCNYLEPVEL. The segment at 304–343 is disordered; that stretch reads QSQPQEDTSPESDIPPPPNSSPPGRLQLSPGHKQKEPKEL. Ser-324 and Ser-398 each carry phosphoserine. Positions 350 to 428 constitute a PB1 domain; that stretch reads PYMLKVHYKY…YCLTLWCEHT (79 aa). Positions 437-457 are disordered; the sequence is EPIQRENSDASKQTTEPQPKE. One can recognise an SH3 2 domain in the interval 456–515; that stretch reads KEGTQVVAIFSYEAAQPEDLEFVEGDVILVLSHVNEEWLEGECKGKVGIFPKAFVEGCAA.

It belongs to the NCF2/NOXA1 family. Component of the phagocyte NADPH oxidase complex composed of an obligatory core heterodimer formed by the membrane proteins CYBA and CYBB and the cytosolic regulatory subunits NCF1/p47-phox, NCF2/p67-phox, NCF4/p40-phox and the small GTPase RAC1 or RAC2. Part of a cytosolic complex composed at least by NCF1, NCF2 and NCF4. Interacts with NCF4. Interacts (via the C-terminal SH3 domain) with NCF1 (via C-terminus). Interacts with SYTL1 and RAC1. May interact with NOXO1. Interacts with S100A8 and calprotectin (S100A8/9). Interacts with GBP7 (via GB1/RHD3-type G domain). Interacts with CYBB; the interaction is enhanced in the presence of GBP7.

Its subcellular location is the cytoplasm. NCF2, NCF1, and a membrane bound cytochrome b558 are required for activation of the latent NADPH oxidase (necessary for superoxide production). Functionally, subunit of the phagocyte NADPH oxidase complex that mediates the transfer of electrons from cytosolic NADPH to O2 to produce the superoxide anion (O2(-)). In the activated complex, electrons are first transferred from NADPH to flavin adenine dinucleotide (FAD) and subsequently transferred via two heme molecules to molecular oxygen, producing superoxide through an outer-sphere reaction. Activation of the NADPH oxidase complex is initiated by the assembly of cytosolic subunits of the NADPH oxidase complex with the core NADPH oxidase complex to form a complex at the plasma membrane or phagosomal membrane. This activation process is initiated by phosphorylation dependent binding of the cytosolic NCF1/p47-phox subunit to the C-terminus of CYBA/p22-phox. In Mus musculus (Mouse), this protein is Neutrophil cytosol factor 2.